The following is a 129-amino-acid chain: Aspartate 1-decarboxylase (129 aa).

The Schiff-base intermediate with substrate; via pyruvic acid role is filled by serine 25. Serine 25 carries the pyruvic acid (Ser) modification. A substrate-binding site is contributed by threonine 57. The active-site Proton donor is tyrosine 58. 73-75 provides a ligand contact to substrate; that stretch reads GAA.

Belongs to the PanD family. As to quaternary structure, heterooctamer of four alpha and four beta subunits. It depends on pyruvate as a cofactor. Is synthesized initially as an inactive proenzyme, which is activated by self-cleavage at a specific serine bond to produce a beta-subunit with a hydroxyl group at its C-terminus and an alpha-subunit with a pyruvoyl group at its N-terminus.

It localises to the cytoplasm. It catalyses the reaction L-aspartate + H(+) = beta-alanine + CO2. Its pathway is cofactor biosynthesis; (R)-pantothenate biosynthesis; beta-alanine from L-aspartate: step 1/1. Catalyzes the pyruvoyl-dependent decarboxylation of aspartate to produce beta-alanine. The polypeptide is Aspartate 1-decarboxylase (Prosthecochloris aestuarii (strain DSM 271 / SK 413)).